A 405-amino-acid chain; its full sequence is Angiopoietin-related protein 4 (405 aa).

The first 23 residues, 1–23 (MRCAPTAGAALVLCAATAGLLSA), serve as a signal peptide directing secretion. A coiled-coil region spans residues 54 to 146 (GLREHVERTR…QNLQSQIDLL (93 aa)). Asn176 carries an N-linked (GlcNAc...) asparagine glycan. A Fibrinogen C-terminal domain is found at 178 to 400 (TRLHRPPRDC…ATTLLIQPME (223 aa)). A disulfide bond links Cys187 and Cys215. N-linked (GlcNAc...) asparagine glycosylation is found at Asn231 and Asn237. Residues Cys340 and Cys353 are joined by a disulfide bond.

In terms of assembly, homooligomer; disulfide-linked via Cys residues in the N-terminal part of the protein. The homooligomer undergoes proteolytic processing to release its carboxyl fibrinogen-like domain, which circulates as a monomer. The homooligomer unprocessed form is able to interact with the extracellular matrix. N-glycosylated. Post-translationally, forms disulfide-linked dimers and tetramers. In terms of processing, cleaved into a smaller N-terminal chain and a larger chain that contains the fibrinogen C-terminal domain; both cleaved and uncleaved forms are detected in the extracellular space. The cleaved form is not present within the cell.

The protein resides in the secreted. The protein localises to the extracellular space. It localises to the extracellular matrix. In terms of biological role, mediates inactivation of the lipoprotein lipase LPL, and thereby plays a role in the regulation of triglyceride clearance from the blood serum and in lipid metabolism. May also play a role in regulating glucose homeostasis and insulin sensitivity. Inhibits proliferation, migration, and tubule formation of endothelial cells and reduces vascular leakage. Upon heterologous expression, inhibits the adhesion of endothelial cell to the extracellular matrix (ECM), and inhibits the reorganization of the actin cytoskeleton, formation of actin stress fibers and focal adhesions in endothelial cells that have adhered to ANGPTL4-containing ECM (in vitro). Depending on context, may modulate tumor-related angiogenesis. Mediates inactivation of the lipoprotein lipase LPL, and thereby plays an important role in the regulation of triglyceride clearance from the blood serum and in lipid metabolism. Has higher activity in LPL inactivation than the uncleaved protein. This Rattus norvegicus (Rat) protein is Angiopoietin-related protein 4 (Angptl4).